A 243-amino-acid polypeptide reads, in one-letter code: Triosephosphate isomerase (243 aa).

9 to 11 (NWK) contacts substrate. The active-site Electrophile is the His96. Glu165 acts as the Proton acceptor in catalysis. Substrate-binding positions include Gly171, Ser204, and 225–226 (GG).

The protein belongs to the triosephosphate isomerase family. In terms of assembly, homodimer.

It is found in the cytoplasm. It carries out the reaction D-glyceraldehyde 3-phosphate = dihydroxyacetone phosphate. It functions in the pathway carbohydrate biosynthesis; gluconeogenesis. Its pathway is carbohydrate degradation; glycolysis; D-glyceraldehyde 3-phosphate from glycerone phosphate: step 1/1. In terms of biological role, involved in the gluconeogenesis. Catalyzes stereospecifically the conversion of dihydroxyacetone phosphate (DHAP) to D-glyceraldehyde-3-phosphate (G3P). In Nostoc punctiforme (strain ATCC 29133 / PCC 73102), this protein is Triosephosphate isomerase.